We begin with the raw amino-acid sequence, 180 residues long: Superoxide dismutase [Cu-Zn] (180 aa).

A signal peptide spans 1–19 (MFMNLLSQVSNAIFPQVEA). Histidine 68, histidine 70, and histidine 85 together coordinate Cu cation. Cysteine 79 and cysteine 171 form a disulfide bridge. Histidine 85, histidine 93, histidine 102, and aspartate 105 together coordinate Zn(2+). Histidine 142 is a binding site for Cu cation.

The protein belongs to the Cu-Zn superoxide dismutase family. In terms of assembly, homodimer. It depends on Cu cation as a cofactor. Requires Zn(2+) as cofactor.

The protein resides in the cytoplasm. It carries out the reaction 2 superoxide + 2 H(+) = H2O2 + O2. Destroys radicals which are normally produced within the cells and which are toxic to biological systems. Required for normal brood size. May be involved in regulating mpk-1 phosphorylation downstream of phosphatase ptp-2 during oocyte maturation. In Caenorhabditis briggsae, this protein is Superoxide dismutase [Cu-Zn].